The chain runs to 480 residues: UDP-glucose 6-dehydrogenase 4 (480 aa).

NAD(+)-binding positions include 3–20, Asp-33, Arg-38, Thr-90, Thr-128, and Glu-161; that span reads KICC…MAVI. Substrate contacts are provided by residues 157–161, Lys-216, 216–223, 256–269, and Gly-269; these read EFLAE, KLAANAFL, and RIGS…VGFG. Cys-272 serves as the catalytic Nucleophile. Lys-275 is a binding site for NAD(+). Residues Phe-334 and Lys-335 each contribute to the substrate site. Arg-342 contacts NAD(+). Arg-447 contacts substrate.

Belongs to the UDP-glucose/GDP-mannose dehydrogenase family.

The enzyme catalyses UDP-alpha-D-glucose + 2 NAD(+) + H2O = UDP-alpha-D-glucuronate + 2 NADH + 3 H(+). It functions in the pathway nucleotide-sugar biosynthesis; UDP-alpha-D-glucuronate biosynthesis; UDP-alpha-D-glucuronate from UDP-alpha-D-glucose: step 1/1. Inhibited by UDP-xylose. Functionally, involved in the biosynthesis of UDP-glucuronic acid (UDP-GlcA), providing nucleotide sugars for cell-wall polymers. This is UDP-glucose 6-dehydrogenase 4 from Arabidopsis thaliana (Mouse-ear cress).